The primary structure comprises 282 residues: AB hydrolase superfamily protein FGSG_00045 (282 aa).

Residues 1–10 show a composition bias toward polar residues; it reads MAPISSTRPS. The segment at 1-22 is disordered; the sequence is MAPISSTRPSHSIAADNPNPTT. Residues 22–270 enclose the AB hydrolase-1 domain; sequence TQVNFNTNMT…FADMVKRWII (249 aa).

Belongs to the AB hydrolase superfamily.

Its pathway is mycotoxin biosynthesis. AB hydrolase superfamily protein; part of the gene cluster that mediates the biosynthesis of gramillins A and B, bicyclic lipopeptides that induce cell death in maize leaves but not in wheat leaves. The nonribosomal peptide synthetase GRA1 incorporates respectively a glutamic adic (Glu), a leucine (Leu), a serine (Ser), a hydroxyglutamine (HOGln), a 2-amino decanoic acid, and 2 cysteins (CysB and CysA). The biosynthesis of 2-amino decanoic acid incorporated in gramillins could be initiated by a fatty acid synthase composed of the alpha and beta subunits FGSG_00036 and FGSG_11656. The cytochrome P450 monooxygenase FGSG_15680 could hydroxylate the fatty acid chain. Subsequent oxidation to the ketone by the oxidoreductase FGSG_00048 and transamination by aminotransferase FGSG_00049 could form 2-amino-decanoic acid. On the other hand, FGSG_15680 could also be responsible for the HO-modified glutamine at the gamma-position. Whether hydroxylation occurs on the fully assembled product or on the Gln residue prior to assembly into the gramillins requires further proof. The thioredoxin FGSG_00043 could also be required for the disulfide-bond formation between CysA and CysB. The specific involvement of the remaining proteins from the cluster is more difficult to discern, but could have broader regulatory (FGSG_00040 and FGSG_11657) or enzymatic functions (FGSG_00044 and FGSG_00045). The final C-domain of GRA1 does not possess the expected sequence of a termination CT domain, often implicated in macrocyclization and release of a cyclopeptidein fungal NRPs; and the thioesterase FGSG_00047 may act in concert with the terminal C-domain of GRA1 to catalyze the formation of the macrocyclic anhydride and release of the products. This is AB hydrolase superfamily protein FGSG_00045 from Gibberella zeae (strain ATCC MYA-4620 / CBS 123657 / FGSC 9075 / NRRL 31084 / PH-1) (Wheat head blight fungus).